The chain runs to 153 residues: Fucose mutarotase (153 aa).

Residue His-24 is the Proton donor of the active site. Residue Asp-32 coordinates substrate. Asp-69 is a catalytic residue. Residues Met-78, Tyr-119, Tyr-137, and Asn-139 each coordinate substrate. The active site involves Tyr-119.

The protein belongs to the RbsD / FucU family.

The catalysed reaction is alpha-L-fucose = beta-L-fucose. In terms of biological role, involved in the interconversion between alpha- and beta-L-fucoses. This is Fucose mutarotase (fuom) from Danio rerio (Zebrafish).